Consider the following 255-residue polypeptide: Thiazole synthase (255 aa).

Catalysis depends on lysine 96, which acts as the Schiff-base intermediate with DXP. 1-deoxy-D-xylulose 5-phosphate contacts are provided by residues glycine 157, 183–184 (AG), and 205–206 (NT).

Belongs to the ThiG family. As to quaternary structure, homotetramer. Forms heterodimers with either ThiH or ThiS.

The protein resides in the cytoplasm. It carries out the reaction [ThiS sulfur-carrier protein]-C-terminal-Gly-aminoethanethioate + 2-iminoacetate + 1-deoxy-D-xylulose 5-phosphate = [ThiS sulfur-carrier protein]-C-terminal Gly-Gly + 2-[(2R,5Z)-2-carboxy-4-methylthiazol-5(2H)-ylidene]ethyl phosphate + 2 H2O + H(+). Its pathway is cofactor biosynthesis; thiamine diphosphate biosynthesis. In terms of biological role, catalyzes the rearrangement of 1-deoxy-D-xylulose 5-phosphate (DXP) to produce the thiazole phosphate moiety of thiamine. Sulfur is provided by the thiocarboxylate moiety of the carrier protein ThiS. In vitro, sulfur can be provided by H(2)S. This Heliobacterium modesticaldum (strain ATCC 51547 / Ice1) protein is Thiazole synthase.